The following is a 358-amino-acid chain: Trace amine-associated receptor 7b (358 aa).

Topologically, residues 1-47 are extracellular; sequence MATDNDSFPWDQDSILSSDMFSATSTELCYENLNRSCVRSPYSPGPR. Asn-5 and Asn-34 each carry an N-linked (GlcNAc...) asparagine glycan. 2 disulfides stabilise this stretch: Cys-37–Cys-201 and Cys-120–Cys-205. A helical membrane pass occupies residues 48-68; the sequence is LILYAVFGFGAALAVCGNLLV. The Cytoplasmic segment spans residues 69 to 83; sequence MTSILHFRQLHSPAN. The helical transmembrane segment at 84 to 104 threads the bilayer; the sequence is FLVVSLACADFLVGLTVMPFS. At 105 to 121 the chain is on the extracellular side; sequence TVRSVEGCWYFGESYCK. The chain crosses the membrane as a helical span at residues 122–143; sequence LHTCFDVSFCYCSIFHLCFISV. At 144 to 166 the chain is on the cytoplasmic side; the sequence is DRYIAVSDPLTYPTRFTAFVSGK. Residues 167 to 187 form a helical membrane-spanning segment; it reads CITFSWLLSTIYGFSLLYTGA. The Extracellular segment spans residues 188–212; the sequence is NEAGLEDLVSALTCVGGCQLAVNQS. An N-linked (GlcNAc...) asparagine glycan is attached at Asn-210. The helical transmembrane segment at 213–233 threads the bilayer; sequence WVFINFLLFLIPTLVMITVYS. Residues 234 to 274 are Cytoplasmic-facing; it reads KIFLIAKQQAQNIEKMSKQTARASDSYKDRVAKRERKAAKT. The chain crosses the membrane as a helical span at residues 275–295; it reads LGIAVAAFLLSWLPYFIDSII. Residues 296–309 lie on the Extracellular side of the membrane; it reads DAFLGFITPTYVYE. A helical transmembrane segment spans residues 310–333; sequence ILVWIAYYNSAMNPLIYAFFYPWF. The Cytoplasmic segment spans residues 334 to 358; it reads RKAIKLIVSGKVLRENSSTTNLFPE.

Belongs to the G-protein coupled receptor 1 family. As to expression, specifically expressed in neurons of the olfactory epithelium.

The protein resides in the cell membrane. Olfactory receptor specific for N,N-dimethylalkylamines trace amines, such as N,N-dimethylcyclohexylamine. Trace amine compounds are enriched in animal body fluids and act on trace amine-associated receptors (TAARs) to elicit both intraspecific and interspecific innate behaviors. Ligand-binding causes a conformation change that triggers signaling via G(s)-class of G alpha proteins (GNAL or GNAS). In Mus musculus (Mouse), this protein is Trace amine-associated receptor 7b.